Consider the following 122-residue polypeptide: Large ribosomal subunit protein bL12 (122 aa).

Belongs to the bacterial ribosomal protein bL12 family. As to quaternary structure, homodimer. Part of the ribosomal stalk of the 50S ribosomal subunit. Forms a multimeric L10(L12)X complex, where L10 forms an elongated spine to which 2 to 4 L12 dimers bind in a sequential fashion. Binds GTP-bound translation factors.

Forms part of the ribosomal stalk which helps the ribosome interact with GTP-bound translation factors. Is thus essential for accurate translation. In Glaesserella parasuis serovar 5 (strain SH0165) (Haemophilus parasuis), this protein is Large ribosomal subunit protein bL12.